Here is a 565-residue protein sequence, read N- to C-terminus: Zinc finger protein 143 (565 aa).

7 C2H2-type zinc fingers span residues 230 to 254 (FRCDYEGCGKLYTTAHHLKVHERSH), 260 to 284 (YQCDHGSCRKAFATGYGLKSHVRTH), 290 to 314 (YRCSEENCTKSFKTSGDLQKHVRTH), 320 to 344 (FKCPFEGCGRSFTTSNIRKVHIRTH), 350 to 374 (YYCSEPGCGRAFASATNYKNHVRIH), 380 to 404 (YVCTVPGCDKRFTEYSSLYKHHVVH), and 410 to 433 (YNCNHCGKTYKQISTLAMHKRTAH).

It belongs to the GLI C2H2-type zinc-finger protein family.

The protein resides in the nucleus. Its function is as follows. Transcriptional activator. Activates the gene for selenocysteine tRNA (tRNAsec). Binds to the activator element (AE) motif of the selenocysteine tRNA gene promoter. The chain is Zinc finger protein 143 (znf143) from Xenopus laevis (African clawed frog).